Here is a 228-residue protein sequence, read N- to C-terminus: Endonuclease V (228 aa).

Mg(2+)-binding residues include Asp36 and Asp104.

The protein belongs to the endonuclease V family. Mg(2+) is required as a cofactor.

It localises to the cytoplasm. The catalysed reaction is Endonucleolytic cleavage at apurinic or apyrimidinic sites to products with a 5'-phosphate.. Functionally, DNA repair enzyme involved in the repair of deaminated bases. Selectively cleaves double-stranded DNA at the second phosphodiester bond 3' to a deoxyinosine leaving behind the intact lesion on the nicked DNA. The sequence is that of Endonuclease V from Serratia proteamaculans (strain 568).